The sequence spans 179 residues: Large ribosomal subunit protein uL5 (179 aa).

The protein belongs to the universal ribosomal protein uL5 family. Part of the 50S ribosomal subunit; part of the 5S rRNA/L5/L18/L25 subcomplex. Contacts the 5S rRNA and the P site tRNA. Forms a bridge to the 30S subunit in the 70S ribosome.

In terms of biological role, this is one of the proteins that bind and probably mediate the attachment of the 5S RNA into the large ribosomal subunit, where it forms part of the central protuberance. In the 70S ribosome it contacts protein S13 of the 30S subunit (bridge B1b), connecting the 2 subunits; this bridge is implicated in subunit movement. Contacts the P site tRNA; the 5S rRNA and some of its associated proteins might help stabilize positioning of ribosome-bound tRNAs. This chain is Large ribosomal subunit protein uL5, found in Staphylococcus carnosus (strain TM300).